The chain runs to 61 residues: Large ribosomal subunit protein bL33 (61 aa).

The protein belongs to the bacterial ribosomal protein bL33 family.

The sequence is that of Large ribosomal subunit protein bL33 from Amoebophilus asiaticus (strain 5a2).